Consider the following 273-residue polypeptide: Histidine racemase (273 aa).

The active-site Proton acceptor is Cys72. Cys211 (proton donor) is an active-site residue.

It belongs to the histidine racemase family. As to quaternary structure, homodimer.

The protein localises to the cytoplasm. It catalyses the reaction L-histidine = D-histidine. Functionally, isomerase that catalyzes the conversion of L-histidine to D-histidine. Functions the biosynthesis of the metallophore staphylopine, which is involved in the acquisition of nickel, cobalt, zinc, copper, and iron, and thus enables bacterial growth inside the host, where metal access is limited. Therefore, this enzyme probably contributes to staphylococcal virulence. The reaction is reversible in vitro, the enzyme can produce D-histidine from the L-stereoisomer and vice versa. Appears to be specific for histidine as it cannot use other amino acids as substrate, including L-alanine and L-methionine. In Staphylococcus aureus (strain Mu50 / ATCC 700699), this protein is Histidine racemase.